We begin with the raw amino-acid sequence, 488 residues long: Intron-encoded DNA endonuclease I-AniI (488 aa).

The cobA exon 1 encoded stretch occupies residues 1-169 (MRILKSHPLL…DIVEFIWGGL (169 aa)). The tract at residues 170 to 488 (YTDEPQCGDV…SEKIKIPSNY (319 aa)) is cobA intron encoded.

It in the C-terminal section; belongs to the LAGLIDADG endonuclease family. In terms of assembly, homodimer. Mg(2+) is required as a cofactor. The mature protein may arise from proteolytic cleavage of an in-frame translation of cobA exon 1 plus intron, containing the I-AniI open reading frame. Cleavage may take place close to Met-213 resulting in an active endonuclease/maturase of about 30 kDa.

It localises to the mitochondrion. Functionally, mitochondrial DNA endonuclease and mRNA maturase involved in intron homing and required for splicing of the cytochrome b (cobA) gene intron, containing its own coding sequence. The protein stimulates the intrinsic ribozyme activity of the intron through binding to and stabilizing specific secondary and tertiary structure elements in the RNA. As an endonuclease it introduces a specific double-strand break at the junction of the two exons the cobA gene and thus mediates the insertion of an intron, containing its own coding sequence (group I intron), into an intronless gene. Recognizes with limited specificity and cleaves the sequence 5'-GAGGAGGTTTCTCTGTA-3'. The proteins RNA and DNA recognition and binding surfaces are independent. In Emericella nidulans (Aspergillus nidulans), this protein is Intron-encoded DNA endonuclease I-AniI (I-AniI).